The primary structure comprises 153 residues: Large ribosomal subunit protein uL15 (153 aa).

The disordered stretch occupies residues 21–41 (RGIGSGKGKTGGRGIKGQKSR). Residues 23–35 (IGSGKGKTGGRGI) are compositionally biased toward gly residues.

This sequence belongs to the universal ribosomal protein uL15 family. Part of the 50S ribosomal subunit.

Functionally, binds to the 23S rRNA. The chain is Large ribosomal subunit protein uL15 from Rickettsia massiliae (strain Mtu5).